The chain runs to 233 residues: Probable F-box protein At3g56670 (233 aa).

Residues 22–69 (HGGVIDIPLNTDSGVTKNTPGEIALLRFKSVSKLWSSIISSRRDFIES) enclose the F-box domain.

In Arabidopsis thaliana (Mouse-ear cress), this protein is Probable F-box protein At3g56670.